A 901-amino-acid polypeptide reads, in one-letter code: Protein translocase subunit SecA (901 aa).

Residues Gln87, 105-109 (GEGKT), and Asp512 contribute to the ATP site. A disordered region spans residues 859–901 (HQDDDSAAAAALAAQTGERKVGRNDPCPCGSGKKYKQCHGRLQ). 4 residues coordinate Zn(2+): Cys885, Cys887, Cys896, and His897. Residues 891–901 (KKYKQCHGRLQ) are compositionally biased toward basic residues.

Belongs to the SecA family. Monomer and homodimer. Part of the essential Sec protein translocation apparatus which comprises SecA, SecYEG and auxiliary proteins SecDF-YajC and YidC. The cofactor is Zn(2+).

Its subcellular location is the cell inner membrane. The protein resides in the cytoplasm. The catalysed reaction is ATP + H2O + cellular proteinSide 1 = ADP + phosphate + cellular proteinSide 2.. Its function is as follows. Part of the Sec protein translocase complex. Interacts with the SecYEG preprotein conducting channel. Has a central role in coupling the hydrolysis of ATP to the transfer of proteins into and across the cell membrane, serving both as a receptor for the preprotein-SecB complex and as an ATP-driven molecular motor driving the stepwise translocation of polypeptide chains across the membrane. This Escherichia coli O157:H7 protein is Protein translocase subunit SecA.